Reading from the N-terminus, the 173-residue chain is Translation initiation factor IF-3 (173 aa).

This sequence belongs to the IF-3 family. In terms of assembly, monomer.

It is found in the cytoplasm. Its function is as follows. IF-3 binds to the 30S ribosomal subunit and shifts the equilibrium between 70S ribosomes and their 50S and 30S subunits in favor of the free subunits, thus enhancing the availability of 30S subunits on which protein synthesis initiation begins. The chain is Translation initiation factor IF-3 from Caulobacter sp. (strain K31).